A 335-amino-acid polypeptide reads, in one-letter code: Biotin synthase (335 aa).

In terms of domain architecture, Radical SAM core spans 46–274; that stretch reads YDIQLASLFS…KSKIRLSAGR (229 aa). Positions 61, 65, and 68 each coordinate [4Fe-4S] cluster. Residues cysteine 105, cysteine 137, cysteine 197, and arginine 269 each coordinate [2Fe-2S] cluster.

It belongs to the radical SAM superfamily. Biotin synthase family. In terms of assembly, homodimer. Requires [4Fe-4S] cluster as cofactor. [2Fe-2S] cluster is required as a cofactor.

The catalysed reaction is (4R,5S)-dethiobiotin + (sulfur carrier)-SH + 2 reduced [2Fe-2S]-[ferredoxin] + 2 S-adenosyl-L-methionine = (sulfur carrier)-H + biotin + 2 5'-deoxyadenosine + 2 L-methionine + 2 oxidized [2Fe-2S]-[ferredoxin]. It participates in cofactor biosynthesis; biotin biosynthesis; biotin from 7,8-diaminononanoate: step 2/2. Catalyzes the conversion of dethiobiotin (DTB) to biotin by the insertion of a sulfur atom into dethiobiotin via a radical-based mechanism. The chain is Biotin synthase from Prochlorococcus marinus (strain MIT 9215).